Here is a 342-residue protein sequence, read N- to C-terminus: Nicotinate-nucleotide--dimethylbenzimidazole phosphoribosyltransferase (342 aa).

The active-site Proton acceptor is Glu-311.

It belongs to the CobT family.

It carries out the reaction 5,6-dimethylbenzimidazole + nicotinate beta-D-ribonucleotide = alpha-ribazole 5'-phosphate + nicotinate + H(+). The protein operates within nucleoside biosynthesis; alpha-ribazole biosynthesis; alpha-ribazole from 5,6-dimethylbenzimidazole: step 1/2. Catalyzes the synthesis of alpha-ribazole-5'-phosphate from nicotinate mononucleotide (NAMN) and 5,6-dimethylbenzimidazole (DMB). This chain is Nicotinate-nucleotide--dimethylbenzimidazole phosphoribosyltransferase, found in Vibrio vulnificus (strain CMCP6).